Consider the following 574-residue polypeptide: Arginine--tRNA ligase (574 aa).

Positions P121 to H131 match the 'HIGH' region motif.

It belongs to the class-I aminoacyl-tRNA synthetase family. As to quaternary structure, monomer.

The protein resides in the cytoplasm. It catalyses the reaction tRNA(Arg) + L-arginine + ATP = L-arginyl-tRNA(Arg) + AMP + diphosphate. The chain is Arginine--tRNA ligase from Buchnera aphidicola subsp. Acyrthosiphon pisum (strain 5A).